Here is a 538-residue protein sequence, read N- to C-terminus: Aldehyde dehydrogenase family 2 member B4, mitochondrial (538 aa).

The N-terminal 38 residues, 1-38 (MAARRVSSLLSRSFSASSPLLFRSQGRNCYNGGILRRF), are a transit peptide targeting the mitochondrion. 282-287 (GSTDTG) is an NAD(+) binding site. The active-site Proton acceptor is Glu-305. Cys-339 serves as the catalytic Nucleophile.

This sequence belongs to the aldehyde dehydrogenase family. Homotetramer.

It is found in the mitochondrion matrix. The enzyme catalyses an aldehyde + NAD(+) + H2O = a carboxylate + NADH + 2 H(+). Functionally, possesses activity on acetaldehyde and glycolaldehyde in vitro. This Arabidopsis thaliana (Mouse-ear cress) protein is Aldehyde dehydrogenase family 2 member B4, mitochondrial (ALDH2B4).